A 313-amino-acid polypeptide reads, in one-letter code: Dioxygenase swnH2 (313 aa).

Fe cation-binding residues include histidine 155, aspartate 157, and histidine 232.

This sequence belongs to the PhyH family. As to quaternary structure, homodimer. The cofactor is Fe cation.

Its pathway is mycotoxin biosynthesis. Functionally, aminotransferase; part of the gene cluster that mediates the biosynthesis of swainsonine (SW), a cytotoxic fungal alkaloid and a potential cancer therapy drug. Swainsonine production occurs via a multibranched pathway and is dispensable for fungal colonization of plants and infection of insect hosts. The first step of swainsonine biosynthesis is the production of the precursor pipecolic acid (PA) via conversion of L-lysine (Lys) to 1-piperideine-6-carboxylate (P6C) by the aminotransferase swnA, the latter being further reduced to PA by the reductase swnR. The PKS-NRPS hybrid synthetase swnK uptakes and condensates PA and malonyl-CoA with and without skipping of the ketoreductase (KR) domain in order to produce 3 intermediates, 1-oxoindolizidine, (1S)-1-hydroxyindolizin, and (1R)-1-hydroxyindolizine; with the transisomer (1S)-1-hydroxyindolizin being predominant. The terminal thioester reductase (TE) domain of swnK is involved in reduction of the thioester bond to release the intermediate aldehydes. The oxidoreductase swnN could contribute to the reduction of 1-oxoindolizidine to (1S)-1-hydroxyindolizin and (1R)-1-hydroxyindolizine, contributing to the major route of SW production. The dioxygenase swnH2 would be responsible for the oxidization of (1R)-1-hydroxyindolizine into (1R,2S)-1,2-dihydroxyindolizine and of (1S)-1-hydroxyindolizin to yield both (1R,2S)-1,2-dihydroxyindolizine and (1S,2S)-1,2-dihydroxyindolizine. The dioxygenase swnH1 then performs the conversion of the 1,2-dihydroxyindolizine epimers to SW. This chain is Dioxygenase swnH2, found in Arthroderma benhamiae (strain ATCC MYA-4681 / CBS 112371) (Trichophyton mentagrophytes).